Reading from the N-terminus, the 142-residue chain is 3-hydroxyacyl-[acyl-carrier-protein] dehydratase FabZ (142 aa).

Residue H50 is part of the active site.

Belongs to the thioester dehydratase family. FabZ subfamily.

It localises to the cytoplasm. It catalyses the reaction a (3R)-hydroxyacyl-[ACP] = a (2E)-enoyl-[ACP] + H2O. Involved in unsaturated fatty acids biosynthesis. Catalyzes the dehydration of short chain beta-hydroxyacyl-ACPs and long chain saturated and unsaturated beta-hydroxyacyl-ACPs. In Clostridium tetani (strain Massachusetts / E88), this protein is 3-hydroxyacyl-[acyl-carrier-protein] dehydratase FabZ.